The following is a 167-amino-acid chain: L-alanine exporter AlaE (167 aa).

A run of 4 helical transmembrane segments spans residues Gly25–Ile45, Ile50–Ile70, Phe105–Val125, and Leu129–Val149.

Belongs to the AlaE exporter family.

The protein localises to the cell inner membrane. In terms of biological role, exports L-alanine. The sequence is that of L-alanine exporter AlaE from Pantoea sp. (strain At-9b).